A 572-amino-acid chain; its full sequence is Ribonuclease Y (572 aa).

Residues 1–21 (MPTLYVILSLLLGLIGGVLVQ) form a helical membrane-spanning segment. Disordered regions lie at residues 59–85 (HEAAEQDRQDAISKTQDAARRVQDAAE) and 110–142 (QLEAEREQAKADAAQQREALSTDRQETRRERED). Composition is skewed to basic and acidic residues over residues 110–119 (QLEAEREQAK) and 129–142 (LSTDRQETRRERED). The KH domain maps to 262–322 (SVSVVPIPSD…LRREVARHVL (61 aa)). One can recognise an HD domain in the interval 388–481 (VLKHSVQVAH…VAAADAISAA (94 aa)).

The protein belongs to the RNase Y family.

The protein localises to the cell membrane. Endoribonuclease that initiates mRNA decay. This Deinococcus radiodurans (strain ATCC 13939 / DSM 20539 / JCM 16871 / CCUG 27074 / LMG 4051 / NBRC 15346 / NCIMB 9279 / VKM B-1422 / R1) protein is Ribonuclease Y.